The primary structure comprises 264 residues: Apolipoprotein A-I (264 aa).

Positions 1–18 (MKAVVLAVAVLFLTGSQA) are cleaved as a signal peptide. 2 tandem repeats follow at residues 67–88 (LNLLENWDTFGSTFGRLQEQLG) and 89–110 (PVTREFWDSLEKDTDWLRQEMN). The interval 67–264 (LNLLENWDTF…DEATQKLNTQ (198 aa)) is 10 X approximate tandem repeats. M109 carries the methionine sulfoxide modification. The stretch at 111 to 121 (KDLEEVKQKVQ) is one 3; half-length repeat. A run of 3 repeats spans residues 122–143 (PYLDEFQKKWEEEVERYRPKVE), 144–165 (PLGAQLREGARQKLEELQKQLV), and 166–187 (PLGEDLRDRARLHVDALRTKLA). One copy of the 7; truncated repeat lies at 188–207 (PYSDQMRDRLAERLTALRDN). The residue at position 193 (M193) is a Methionine sulfoxide. Repeat 8 spans residues 208–229 (PKLAEYHARATEHLKKLGEKTK). A 9; half-length repeat occupies 230-240 (PTLEDLRQGLM). M240 is subject to Methionine sulfoxide. Residues 241-264 (PWLESLKAKALSVLDEATQKLNTQ) form repeat 10.

This sequence belongs to the apolipoprotein A1/A4/E family. As to quaternary structure, homodimer. Interacts with APOA1BP and CLU. Component of a sperm activating protein complex (SPAP), consisting of APOA1, an immunoglobulin heavy chain, an immunoglobulin light chain and albumin. Interacts with NDRG1. Interacts with SCGB3A2. Interacts with NAXE and YJEFN3. In terms of processing, glycosylated. Palmitoylated. Post-translationally, phosphorylation sites are present in the extracellular medium.

Its subcellular location is the secreted. Its function is as follows. Participates in the reverse transport of cholesterol from tissues to the liver for excretion by promoting cholesterol efflux from tissues and by acting as a cofactor for the lecithin cholesterol acyltransferase (LCAT). As part of the SPAP complex, activates spermatozoa motility. This Nannospalax galili (Northern Israeli blind subterranean mole rat) protein is Apolipoprotein A-I (Apoa1).